The primary structure comprises 451 residues: Glucose-6-phosphate isomerase (451 aa).

T38 carries the phosphothreonine modification. Catalysis depends on E290, which acts as the Proton donor. Residues H311 and K425 contribute to the active site.

It belongs to the GPI family.

Its subcellular location is the cytoplasm. It catalyses the reaction alpha-D-glucose 6-phosphate = beta-D-fructose 6-phosphate. The protein operates within carbohydrate biosynthesis; gluconeogenesis. Its pathway is carbohydrate degradation; glycolysis; D-glyceraldehyde 3-phosphate and glycerone phosphate from D-glucose: step 2/4. Functionally, catalyzes the reversible isomerization of glucose-6-phosphate to fructose-6-phosphate. This Shouchella clausii (strain KSM-K16) (Alkalihalobacillus clausii) protein is Glucose-6-phosphate isomerase.